Consider the following 376-residue polypeptide: Flap endonuclease 1 (376 aa).

Residues 1–105 (MGIKGLSKLL…GELHKRKENA (105 aa)) are N-domain. A Mg(2+)-binding site is contributed by Asp34. DNA is bound by residues Arg47 and Arg71. Mg(2+) is bound by residues Asp87, Glu159, Glu161, Asp180, and Asp182. The interval 123–254 (QAKKLMKRTA…ITAFELIQQY (132 aa)) is I-domain. Glu159 serves as a coordination point for DNA. Gly232 and Asp234 together coordinate DNA. Position 234 (Asp234) interacts with Mg(2+). Positions 336 to 344 (AQGRLDSFF) are interaction with PCNA. The disordered stretch occupies residues 354-376 (SEAASGVKRKKPTTKAKESRKKK). The segment covering 360–376 (VKRKKPTTKAKESRKKK) has biased composition (basic residues).

Belongs to the XPG/RAD2 endonuclease family. FEN1 subfamily. In terms of assembly, interacts with PCNA. Three molecules of FEN1 bind to one PCNA trimer with each molecule binding to one PCNA monomer. PCNA stimulates the nuclease activity without altering cleavage specificity. Mg(2+) is required as a cofactor. Phosphorylated. Phosphorylation upon DNA damage induces relocalization to the nuclear plasma.

Its subcellular location is the nucleus. It localises to the nucleolus. The protein resides in the nucleoplasm. The protein localises to the mitochondrion. Its function is as follows. Structure-specific nuclease with 5'-flap endonuclease and 5'-3' exonuclease activities involved in DNA replication and repair. During DNA replication, cleaves the 5'-overhanging flap structure that is generated by displacement synthesis when DNA polymerase encounters the 5'-end of a downstream Okazaki fragment. It enters the flap from the 5'-end and then tracks to cleave the flap base, leaving a nick for ligation. Also involved in the long patch base excision repair (LP-BER) pathway, by cleaving within the apurinic/apyrimidinic (AP) site-terminated flap. Acts as a genome stabilization factor that prevents flaps from equilibrating into structures that lead to duplications and deletions. Also possesses 5'-3' exonuclease activity on nicked or gapped double-stranded DNA, and exhibits RNase H activity. Also involved in replication and repair of rDNA and in repairing mitochondrial DNA. The polypeptide is Flap endonuclease 1 (Entamoeba histolytica (strain ATCC 30459 / HM-1:IMSS / ABRM)).